The sequence spans 190 residues: Putative 3-methyladenine DNA glycosylase (190 aa).

The protein belongs to the DNA glycosylase MPG family.

This chain is Putative 3-methyladenine DNA glycosylase, found in Corynebacterium efficiens (strain DSM 44549 / YS-314 / AJ 12310 / JCM 11189 / NBRC 100395).